A 473-amino-acid polypeptide reads, in one-letter code: Hyaluronidase-2 (473 aa).

Positions 1–20 are cleaved as a signal peptide; the sequence is MRAGLGPIITLALVLEVAWA. 2 cysteine pairs are disulfide-bonded: cysteine 47-cysteine 340 and cysteine 211-cysteine 227. N-linked (GlcNAc...) asparagine glycans are attached at residues asparagine 74 and asparagine 103. The Proton donor role is filled by glutamate 135. N-linked (GlcNAc...) asparagine glycosylation is present at asparagine 357. Residues 361-439 form the EGF-like domain; that stretch reads ATQYCSWTQC…YLGWGGEQCQ (79 aa). Intrachain disulfides connect cysteine 365/cysteine 376, cysteine 370/cysteine 427, and cysteine 429/cysteine 438. Aspartate 448 carries the GPI-anchor amidated aspartate lipid modification. The propeptide at 449–473 is removed in mature form; sequence ASRAWAGAHLASLLGLVAMTLTWTL.

Belongs to the glycosyl hydrolase 56 family. As to quaternary structure, interacts with MST1R.

It localises to the cell membrane. The catalysed reaction is Random hydrolysis of (1-&gt;4)-linkages between N-acetyl-beta-D-glucosamine and D-glucuronate residues in hyaluronate.. Functionally, catalyzes hyaluronan degradation into small fragments that are endocytosed and degraded in lysosomes by HYAL1 and exoglycosidases. Essential for the breakdown of extracellular matrix hyaluronan. In Rattus norvegicus (Rat), this protein is Hyaluronidase-2 (Hyal2).